Reading from the N-terminus, the 494-residue chain is Transcriptional regulator of yeast form adherence 3 (494 aa).

Positions 1–360 (MKFAKTLERT…SLGIQKTFPK (360 aa)) constitute an SPX domain. An RING-type zinc finger spans residues 398–437 (CPICMNIAYKPIRLSCGHLFCVRCLVKMKQDDKTSCPLCR).

The protein localises to the nucleus. In terms of biological role, transcription factor required for yeast cell adherence to silicone substrate. This is Transcriptional regulator of yeast form adherence 3 (TRY3) from Candida albicans (strain SC5314 / ATCC MYA-2876) (Yeast).